The sequence spans 203 residues: NADH-quinone oxidoreductase subunit C (203 aa).

Belongs to the complex I 30 kDa subunit family. As to quaternary structure, NDH-1 is composed of 14 different subunits. Subunits NuoB, C, D, E, F, and G constitute the peripheral sector of the complex.

The protein localises to the cell inner membrane. The enzyme catalyses a quinone + NADH + 5 H(+)(in) = a quinol + NAD(+) + 4 H(+)(out). Its function is as follows. NDH-1 shuttles electrons from NADH, via FMN and iron-sulfur (Fe-S) centers, to quinones in the respiratory chain. The immediate electron acceptor for the enzyme in this species is believed to be ubiquinone. Couples the redox reaction to proton translocation (for every two electrons transferred, four hydrogen ions are translocated across the cytoplasmic membrane), and thus conserves the redox energy in a proton gradient. The sequence is that of NADH-quinone oxidoreductase subunit C from Verminephrobacter eiseniae (strain EF01-2).